The following is a 956-amino-acid chain: UvrABC system protein A (956 aa).

Gly-33–Ser-40 is a binding site for ATP. A C4-type zinc finger spans residues Cys-252 to Cys-279. ABC transporter domains lie at Trp-309–Ile-587 and Gly-607–Lys-936. ATP is bound at residue Gly-639 to Ser-646. The segment at Cys-738 to Cys-764 adopts a C4-type zinc-finger fold.

Belongs to the ABC transporter superfamily. UvrA family. Forms a heterotetramer with UvrB during the search for lesions.

It is found in the cytoplasm. In terms of biological role, the UvrABC repair system catalyzes the recognition and processing of DNA lesions. UvrA is an ATPase and a DNA-binding protein. A damage recognition complex composed of 2 UvrA and 2 UvrB subunits scans DNA for abnormalities. When the presence of a lesion has been verified by UvrB, the UvrA molecules dissociate. The sequence is that of UvrABC system protein A from Listeria innocua serovar 6a (strain ATCC BAA-680 / CLIP 11262).